We begin with the raw amino-acid sequence, 316 residues long: Ornithine carbamoyltransferase (316 aa).

Residues 57–60 (STRT), Gln-84, Arg-108, and 135–138 (HPCQ) each bind carbamoyl phosphate. Residues Asn-166, Asp-230, and 234-235 (SM) each bind L-ornithine. Residues 269 to 270 (CL) and Arg-297 each bind carbamoyl phosphate.

This sequence belongs to the aspartate/ornithine carbamoyltransferase superfamily. OTCase family.

The protein localises to the cytoplasm. It catalyses the reaction carbamoyl phosphate + L-ornithine = L-citrulline + phosphate + H(+). The protein operates within amino-acid degradation; L-arginine degradation via ADI pathway; carbamoyl phosphate from L-arginine: step 2/2. In terms of biological role, reversibly catalyzes the transfer of the carbamoyl group from carbamoyl phosphate (CP) to the N(epsilon) atom of ornithine (ORN) to produce L-citrulline. This chain is Ornithine carbamoyltransferase, found in Bacillus anthracis (strain CDC 684 / NRRL 3495).